The following is a 276-amino-acid chain: uncharacterized protein (276 aa).

A disordered region spans residues 1-70 (MSKAKSPIKS…SDDDEEDSPN (70 aa)). The span at 21 to 35 (VLREKKVKDAEKAEH) shows a compositional bias: basic and acidic residues. The RRM domain occupies 105-183 (GVLYVGRLPH…KLLQCKVIPE (79 aa)). Residues 249–276 (VSHPKAASPVASKKSSKKKNKKVLAAHK) form a disordered region. Over residues 252-261 (PKAASPVASK) the composition is skewed to low complexity. Basic residues predominate over residues 262–276 (KSSKKKNKKVLAAHK).

It is found in the nucleus. It localises to the nucleolus. This is an uncharacterized protein from Schizosaccharomyces pombe (strain 972 / ATCC 24843) (Fission yeast).